A 365-amino-acid chain; its full sequence is Succinyl-diaminopimelate desuccinylase (365 aa).

Histidine 65 provides a ligand contact to Zn(2+). Residue aspartate 67 is part of the active site. Aspartate 96 provides a ligand contact to Zn(2+). The active-site Proton acceptor is glutamate 126. Positions 127, 155, and 340 each coordinate Zn(2+).

The protein belongs to the peptidase M20A family. DapE subfamily. In terms of assembly, homodimer. The cofactor is Zn(2+). Requires Co(2+) as cofactor.

It carries out the reaction N-succinyl-(2S,6S)-2,6-diaminopimelate + H2O = (2S,6S)-2,6-diaminopimelate + succinate. Its pathway is amino-acid biosynthesis; L-lysine biosynthesis via DAP pathway; LL-2,6-diaminopimelate from (S)-tetrahydrodipicolinate (succinylase route): step 3/3. Functionally, catalyzes the hydrolysis of N-succinyl-L,L-diaminopimelic acid (SDAP), forming succinate and LL-2,6-diaminopimelate (DAP), an intermediate involved in the bacterial biosynthesis of lysine and meso-diaminopimelic acid, an essential component of bacterial cell walls. The chain is Succinyl-diaminopimelate desuccinylase from Campylobacter jejuni subsp. jejuni serotype O:6 (strain 81116 / NCTC 11828).